A 283-amino-acid polypeptide reads, in one-letter code: Pantothenate synthetase (283 aa).

30–37 is a binding site for ATP; it reads MGYFHDGH. Histidine 37 (proton donor) is an active-site residue. Glutamine 61 is a binding site for (R)-pantoate. Residue glutamine 61 coordinates beta-alanine. 147-150 contributes to the ATP binding site; sequence GSKD. A (R)-pantoate-binding site is contributed by glutamine 153. ATP-binding positions include valine 176 and 184–187; that span reads MSSR.

It belongs to the pantothenate synthetase family. Homodimer.

The protein resides in the cytoplasm. The catalysed reaction is (R)-pantoate + beta-alanine + ATP = (R)-pantothenate + AMP + diphosphate + H(+). It functions in the pathway cofactor biosynthesis; (R)-pantothenate biosynthesis; (R)-pantothenate from (R)-pantoate and beta-alanine: step 1/1. Functionally, catalyzes the condensation of pantoate with beta-alanine in an ATP-dependent reaction via a pantoyl-adenylate intermediate. This Desulforapulum autotrophicum (strain ATCC 43914 / DSM 3382 / VKM B-1955 / HRM2) (Desulfobacterium autotrophicum) protein is Pantothenate synthetase.